A 289-amino-acid chain; its full sequence is D-psicose 3-epimerase (289 aa).

The substrate site is built by Y6 and A107. E150 serves as the catalytic Proton donor/acceptor. Residue E150 coordinates Mn(2+). Substrate-binding positions include E156 and 183-186 (DTFH). D183 and H209 together coordinate Mn(2+). R215 contacts substrate. E244 (proton donor/acceptor) is an active-site residue. E244 contacts Mn(2+).

Belongs to the hyi family. In terms of assembly, homotetramer. Mn(2+) is required as a cofactor. The cofactor is Co(2+).

It catalyses the reaction D-allulose = keto-D-fructose. Its activity is regulated as follows. Inhibited by Zn(2+) and Cu(2+). In terms of biological role, involved in the biosynthesis of D-psicose. Catalyzes the reversible epimerization of D-fructose at the C3 position to yield D-psicose. The enzyme is highly specific for D-psicose and shows very low activity with D-tagatose. The substrate specificity decreases in the following order: D-fructose, D-tagatose, D-ribulose, D-xylulose, and D-sorbose. It shows a higher level of activity for cis ketoses than for trans-ketoses. This chain is D-psicose 3-epimerase (dpe), found in Agrobacterium fabrum (strain C58 / ATCC 33970) (Agrobacterium tumefaciens (strain C58)).